The following is a 279-amino-acid chain: MAASSSLLLLLHCPTCNFYFDSSSYLKRSRLSSYSSIISRGSPLFVSSFGSMTVKRFSSRVGSRSNDGNEQFGALEQESFINNSSEIRKDLVTGGGIEAIVNRLSKWVVSVLFGSIILLRHDGAALWAVIGSISNSALSVVLKRILNQERPTTTLRSDPGMPSSHAQSISFISVFAVLSVMEWLGTNGVSLFLSGLILALGSYFIRLRVSQKLHTSSQVVVGAIVGSLFCILWYTMWNSLLREAFEASLLVQISVFLFAATFALAFAAYVVLNWFKDER.

The transit peptide at 1 to 88 (MAASSSLLLL…SFINNSSEIR (88 aa)) directs the protein to the chloroplast. 5 consecutive transmembrane segments (helical) span residues 126-142 (LWAV…SVVL), 164-184 (SHAQ…MEWL), 185-205 (GTNG…SYFI), 219-239 (VVVG…MWNS), and 255-275 (VFLF…LNWF).

Belongs to the PA-phosphatase related phosphoesterase family. In terms of tissue distribution, expressed in root tips, root branch points, cotyledons and leaves.

It is found in the plastid. Its subcellular location is the chloroplast inner membrane. Inhibited by Mg(2+). In terms of biological role, exhibits phosphatidate phosphatase (PAP) activity in vitro. May play a secondary role as PAP in plastids. The polypeptide is Lipid phosphate phosphatase epsilon 1, chloroplastic (LPPE1) (Arabidopsis thaliana (Mouse-ear cress)).